The chain runs to 156 residues: Small ribosomal subunit protein uS7 (156 aa).

It belongs to the universal ribosomal protein uS7 family. Part of the 30S ribosomal subunit. Contacts proteins S9 and S11.

Its function is as follows. One of the primary rRNA binding proteins, it binds directly to 16S rRNA where it nucleates assembly of the head domain of the 30S subunit. Is located at the subunit interface close to the decoding center, probably blocks exit of the E-site tRNA. The polypeptide is Small ribosomal subunit protein uS7 (Moorella thermoacetica (strain ATCC 39073 / JCM 9320)).